The primary structure comprises 319 residues: Acetyl-coenzyme A carboxylase carboxyl transferase subunit alpha (319 aa).

The CoA carboxyltransferase C-terminal domain maps to Asn-35 to Asp-296.

Belongs to the AccA family. In terms of assembly, acetyl-CoA carboxylase is a heterohexamer composed of biotin carboxyl carrier protein (AccB), biotin carboxylase (AccC) and two subunits each of ACCase subunit alpha (AccA) and ACCase subunit beta (AccD).

Its subcellular location is the cytoplasm. The catalysed reaction is N(6)-carboxybiotinyl-L-lysyl-[protein] + acetyl-CoA = N(6)-biotinyl-L-lysyl-[protein] + malonyl-CoA. It functions in the pathway lipid metabolism; malonyl-CoA biosynthesis; malonyl-CoA from acetyl-CoA: step 1/1. Its function is as follows. Component of the acetyl coenzyme A carboxylase (ACC) complex. First, biotin carboxylase catalyzes the carboxylation of biotin on its carrier protein (BCCP) and then the CO(2) group is transferred by the carboxyltransferase to acetyl-CoA to form malonyl-CoA. The chain is Acetyl-coenzyme A carboxylase carboxyl transferase subunit alpha from Salmonella arizonae (strain ATCC BAA-731 / CDC346-86 / RSK2980).